Here is a 673-residue protein sequence, read N- to C-terminus: MNSTLSRKIQKVLDIKLDSEDLSNALEELSTFYTSNSIGARRNLRNEIEKRYLDINIQFLDQFDQLNKNINELVLDFEGIKNSCVDICDHLNSTNRVSSELLKNAHELSCGLKEIKEKENTLQQFFKKFKLTPQEEQSLVKKEIDSSFYQTLDRLSEIQNECKKNLLSNQYQKPTYEILEIITKHQDNAYRRLYQWTKEEIKQLLIIEIPILDSFNNIDQQQQQQQQKVMMLPIALSALQNKPLLFKHCLDEISECRTKTISNGFITALSFGGPNGIPRPIEINAHDPQRYLGDMLAWIHQCLASEFELISTILSKVTIKLNENNNNNVDDNIENNNNNNNNNEELNFIEPIIKVLNNSFECINRPLSIRIDQILQSKPGVIITYKMISLLDFYSRMANLITKGSGVCRVSTIFGSIKSNCLSVFFTQIKDNFDRLERSPTVPSPQDLLPTNDIKDSINKLSELISTFNSSLIPLDEREKEYTPVFSSFIQKIINLTTFSATSSKLPLISMAVFMINCLSSIKSVLENYTSFTASNLELLTCQIEAHMDTLVEEQTSELLQQMGIGPKLSILQYSDNKSPLSQIIAMDRLSIVQSIRQFDNCLEQSFGTLLMPNCEKLSDTTLRSLSKKSVSNLISVAYSSLYSAIHDPFNQYDEPNSIFQYKPDQIKTMLDF.

This sequence belongs to the COG6 family. Component of the conserved oligomeric Golgi complex which is composed of eight different subunits and is required for normal Golgi morphology and localization.

The protein resides in the golgi apparatus membrane. Functionally, required for normal Golgi function. In Dictyostelium discoideum (Social amoeba), this protein is Conserved oligomeric Golgi complex subunit 6 (cog6).